The primary structure comprises 176 residues: dCTP deaminase (176 aa).

DCTP-binding positions include 102–107 (RSTFAR) and D118. E128 (proton donor/acceptor) is an active-site residue. Positions 160, 166, and 167 each coordinate dCTP.

This sequence belongs to the dCTP deaminase family. Homotrimer.

It carries out the reaction dCTP + H2O + H(+) = dUTP + NH4(+). The protein operates within pyrimidine metabolism; dUMP biosynthesis; dUMP from dCTP (dUTP route): step 1/2. Catalyzes the deamination of dCTP to dUTP. The chain is dCTP deaminase from Staphylothermus marinus (strain ATCC 43588 / DSM 3639 / JCM 9404 / F1).